The chain runs to 86 residues: Triple QxxK/R motif-containing protein (86 aa).

Residues 51 to 71 (VGLVLAAILALLLAFYAFFYL) form a helical membrane-spanning segment.

The protein belongs to the TRIQK family.

It localises to the endoplasmic reticulum membrane. In terms of biological role, may play a role in cell growth and maintenance of cell morphology. The polypeptide is Triple QxxK/R motif-containing protein (TRIQK) (Pongo abelii (Sumatran orangutan)).